The sequence spans 314 residues: Olfactory receptor 9A1 (314 aa).

Topologically, residues 1–24 are extracellular; the sequence is MLGNYSSATEFFLLGFPGSQEVCR. Asparagine 4 carries an N-linked (GlcNAc...) asparagine glycan. Residues 25-45 traverse the membrane as a helical segment; the sequence is ILFATFFLLYAVTVMGNVVII. The Cytoplasmic portion of the chain corresponds to 46-64; it reads ITVCVDKCLQSPIYFFLGH. The helical transmembrane segment at 65 to 85 threads the bilayer; sequence LCVLEILITSTAVPFMLWGLL. Topologically, residues 86–99 are extracellular; sequence LPSTQIMSLTACAA. The cysteines at positions 97 and 179 are disulfide-linked. The helical transmembrane segment at 100 to 120 threads the bilayer; that stretch reads QLYLYLSLGTLELALMGVMAV. Over 121-140 the chain is Cytoplasmic; the sequence is DRYVAVCNPLRYNIIMNSST. The helical transmembrane segment at 141 to 161 threads the bilayer; that stretch reads FIWVIIVSWVLGFLSEIWPVY. At 162–196 the chain is on the extracellular side; sequence ATFQLTFCKSSVLDHFYCDRGQLLKVSCEDTLFRE. A helical transmembrane segment spans residues 197–217; that stretch reads FILFLMAVFIIIGSLIPTIVS. At 218–239 the chain is on the cytoplasmic side; sequence YTYIISTNLKIPSASGWRKSFS. A helical transmembrane segment spans residues 240–260; that stretch reads TCASHFTYVVIGYGSCLFLYV. Residues 261-271 lie on the Extracellular side of the membrane; the sequence is KPKQTQAAEYN. The chain crosses the membrane as a helical span at residues 272-292; it reads RVVSLLVLVVTPFLNPFIFTL. The Cytoplasmic portion of the chain corresponds to 293 to 314; sequence RNDKFIQAFGDGMKHCYKLLKN.

This sequence belongs to the G-protein coupled receptor 1 family.

It localises to the cell membrane. Its function is as follows. Odorant receptor. In Homo sapiens (Human), this protein is Olfactory receptor 9A1 (OR9A1P).